The sequence spans 318 residues: Dehydration-responsive element-binding protein 2E (318 aa).

A compositionally biased stretch (basic residues) spans 1 to 15 (MESYGRKRAWKKGPT). Positions 1–24 (MESYGRKRAWKKGPTRGKGGPQNA) are disordered. Residues 27 to 84 (EYRGVRQRTWGKWVAEIREPNKRTRLWLGSFATAEEAALAYDEAARRLYGPDAFLNLP) constitute a DNA-binding region (AP2/ERF). Residues 140–178 (ELKNSSSSPTKPPPRTPTRANPPPPPLPTSSPCSTVTNS) are disordered. Pro residues predominate over residues 149–168 (TKPPPRTPTRANPPPPPLPT).

Belongs to the AP2/ERF transcription factor family. ERF subfamily.

It localises to the nucleus. Probable transcriptional activator that binds to the DNA sequence 5'-[AG]CCGAC-3' of the cis-acting dehydration-responsive element (DRE). The protein is Dehydration-responsive element-binding protein 2E (DREB2E) of Oryza sativa subsp. japonica (Rice).